Reading from the N-terminus, the 113-residue chain is Parvalbumin beta (113 aa).

At Ala-1 the chain carries N-acetylalanine. Cys-18 is a glycosylation site (S-linked (Glc) cysteine). EF-hand domains follow at residues 38–73 (FSAD…FAAD) and 77–112 (LTDA…WGAK). Ca(2+) is bound by residues Asp-51, Asp-53, Glu-55, Phe-57, Glu-59, Glu-62, Asp-90, Asp-92, Asp-94, Lys-96, and Glu-101.

This sequence belongs to the parvalbumin family. As to expression, muscle (at protein level).

In muscle, parvalbumin is thought to be involved in relaxation after contraction. It binds two calcium ions. The chain is Parvalbumin beta from Gadus morhua subsp. callarias (Baltic cod).